The primary structure comprises 59 residues: U-actitoxin-Aer2a (59 aa).

In terms of processing, contains 5 disulfide bonds.

It is found in the secreted. The protein resides in the nematocyst. In Anemonia erythraea (Sea anemone), this protein is U-actitoxin-Aer2a.